The sequence spans 156 residues: Transcription antitermination protein NusB (156 aa).

Belongs to the NusB family.

Its function is as follows. Involved in transcription antitermination. Required for transcription of ribosomal RNA (rRNA) genes. Binds specifically to the boxA antiterminator sequence of the ribosomal RNA (rrn) operons. This chain is Transcription antitermination protein NusB, found in Xanthomonas oryzae pv. oryzae (strain MAFF 311018).